The primary structure comprises 211 residues: LexA repressor (211 aa).

The segment at residues 27–47 (QTEIARAFGFKGVRAAQYHLE) is a DNA-binding region (H-T-H motif). Residues Ser-131 and Lys-168 each act as for autocatalytic cleavage activity in the active site.

Belongs to the peptidase S24 family. As to quaternary structure, homodimer.

The catalysed reaction is Hydrolysis of Ala-|-Gly bond in repressor LexA.. In terms of biological role, represses a number of genes involved in the response to DNA damage (SOS response), including recA and lexA. In the presence of single-stranded DNA, RecA interacts with LexA causing an autocatalytic cleavage which disrupts the DNA-binding part of LexA, leading to derepression of the SOS regulon and eventually DNA repair. This is LexA repressor from Stenotrophomonas maltophilia (strain R551-3).